Reading from the N-terminus, the 138-residue chain is MAEEQQNRLQNAIDTMVKSLERDNIRKMQGKMFRCSAQCCEDNGASMQQVHHCIERCHTPLAQAQSLVTNELERFQNRLARCTMHCNDKAKDSFDSGSKEAQVKAQLEGCVIKCAEEHMNLIPSMTKKLKDALAQADK.

It belongs to the FAM136 family.

This Xenopus tropicalis (Western clawed frog) protein is Protein FAM136A (fam136a).